The chain runs to 133 residues: Small ribosomal subunit protein uS11 (133 aa).

The tract at residues 1-23 is disordered; the sequence is MPPKTRGAVRKPRKKDKKNIALG. Positions 7 to 17 are enriched in basic residues; sequence GAVRKPRKKDK.

The protein belongs to the universal ribosomal protein uS11 family. As to quaternary structure, part of the 30S ribosomal subunit. Interacts with proteins S7 and S18. Binds to IF-3.

Functionally, located on the platform of the 30S subunit, it bridges several disparate RNA helices of the 16S rRNA. Forms part of the Shine-Dalgarno cleft in the 70S ribosome. The chain is Small ribosomal subunit protein uS11 from Arthrobacter sp. (strain FB24).